The primary structure comprises 684 residues: Chaperone protein HtpG (684 aa).

The interval 1–329 (MSKKGTIGVT…SPDIPLNVSR (329 aa)) is a; substrate-binding. The segment at 330–548 (SYLQSDANVK…FMRRMRDMAQ (219 aa)) is b. Residues 549-684 (LQPGMSFYGE…EFIRRSQRLL (136 aa)) are c.

It belongs to the heat shock protein 90 family. Homodimer.

Its subcellular location is the cytoplasm. Its function is as follows. Molecular chaperone. Has ATPase activity. This chain is Chaperone protein HtpG, found in Porphyromonas gingivalis (strain ATCC 33277 / DSM 20709 / CIP 103683 / JCM 12257 / NCTC 11834 / 2561).